The chain runs to 622 residues: MNRYTTMKQLGDGTYGSVLMGKSNESGELVAIKRMKRKFYSWDECMNLREVKSLKKLNHANVIKLKEVIRENDHLYFVFEYMKENLYQLMKDRNKLFPESVIRNIMYQILQGLAFIHKHGFFHRDMKPENLLCMGPELVKIADFGLARELRSQPPYTDYVSTRWYRAPEVLLRSSVYSSPIDVWAVGSIMAELYTFRPLFPGTSEVDEIFKICQVLGTPKKSDWPEGYQLASSMNFRFPQCIPINLKTLIPNASSEAIQLMTEMLNWDPKKRPTASQALKHPYFQVGQVLGSSAHHLDTKQTLHKQLQPLEPKPSSSERDPKPLPNILDQPAGQPQPKQGHQPLQTIQPPQNTVTHPPPKQQGHQKPPQTMFPSIIKTIPVNSVSTLGHKGARRRWGQTVFKSGDSCDDIEDDLGASHSKKPSMEACKEKKKESPFRFPDSGLPVSNHFKGENRNLHASVSLKSDPNLSTASTAKQYYLKQSRYLPGVNPKNVSLVAGGKDINSHSWNNQLFPKSLGSMGADLSFKRSNAAGNLGSYTTYNQTGYMPSFLKKEVGSAGQRIQLAPLGASASDYTWSTKTGRGQFSGRTYNPTAKNLNIVNRTQPVPSVHGRTDWVAKYGGHR.

The 281-residue stretch at 4-284 (YTTMKQLGDG…ASQALKHPYF (281 aa)) folds into the Protein kinase domain. ATP is bound by residues 10–18 (LGDGTYGSV) and lysine 33. Aspartate 125 (proton acceptor) is an active-site residue. Residue threonine 157 is modified to Phosphothreonine; by autocatalysis. A Phosphotyrosine; by autocatalysis modification is found at tyrosine 159. The tract at residues 301–371 (QTLHKQLQPL…QGHQKPPQTM (71 aa)) is disordered. Residues 336–355 (QPKQGHQPLQTIQPPQNTVT) are compositionally biased toward polar residues.

This sequence belongs to the protein kinase superfamily. CMGC Ser/Thr protein kinase family. CDC2/CDKX subfamily. As to quaternary structure, interacts with AR and CDK20. Found in a complex containing MAK, AR and NCOA3. Interacts with FZR1 (via WD repeats). Interacts with RP1. Mg(2+) is required as a cofactor. In terms of processing, autophosphorylated. Phosphorylated on serine and threonine residues. In terms of tissue distribution, in pre- and postmeiotic male germ cells in testis. In photoreceptor cells of the retina and in the olfactory receptors, and in certain epithelia of the respiratory tract and choroid plexus (brain).

The protein localises to the nucleus. The protein resides in the cytoplasm. It localises to the cytoskeleton. Its subcellular location is the microtubule organizing center. It is found in the centrosome. The protein localises to the spindle. The protein resides in the midbody. It localises to the cell projection. Its subcellular location is the cilium. It is found in the photoreceptor outer segment. The protein localises to the photoreceptor inner segment. The enzyme catalyses L-seryl-[protein] + ATP = O-phospho-L-seryl-[protein] + ADP + H(+). It carries out the reaction L-threonyl-[protein] + ATP = O-phospho-L-threonyl-[protein] + ADP + H(+). Functionally, essential for the regulation of ciliary length and required for the long-term survival of photoreceptors. Could have an important function in sensory cells and in spermatogenesis. May participate in signaling pathways used in visual and olfactory sensory transduction. Phosphorylates FZR1 in a cell cycle-dependent manner. Plays a role in the transcriptional coactivation of AR. In Mus musculus (Mouse), this protein is Serine/threonine-protein kinase MAK (Mak).